The chain runs to 861 residues: Alpha-actinin A (861 aa).

Positions 1 to 239 (MSEEPTPVSG…VMTYVAQYYH (239 aa)) are actin-binding. Calponin-homology (CH) domains follow at residues 22–127 (ITQK…LRFA) and 136–242 (LSAK…HHFS). Spectrin repeat units follow at residues 240–365 (HFSA…ALEK), 366–480 (AEQE…TGVK), 481–601 (SSAE…EERK), and 602–714 (VQLA…EQVV). 2 EF-hand domains span residues 729 to 764 (EELS…IGDE) and 765 to 800 (LTEE…SRKG). Residues aspartate 742, aspartate 744, aspartate 746, lysine 748, glutamate 753, aspartate 778, aspartate 780, asparagine 782, threonine 784, and glutamate 789 each contribute to the Ca(2+) site.

Belongs to the alpha-actinin family. Homodimer; antiparallel.

The protein resides in the cytoplasm. It localises to the cell cortex. The protein localises to the contractile vacuole. It is found in the cytoplasmic vesicle. Its subcellular location is the phagosome. In terms of biological role, F-actin cross-linking protein which is thought to anchor actin to a variety of intracellular structures. This is a bundling protein. Increases the actin-stimulated ATPase activity of myosin. Involved in vegetative cell growth, phagocytosis, motility and development, probably through stabilization of the actin network in the cortical cytoskeleton. In Dictyostelium discoideum (Social amoeba), this protein is Alpha-actinin A (abpA).